The primary structure comprises 97 residues: Large ribosomal subunit protein bL28 (97 aa).

The protein belongs to the bacterial ribosomal protein bL28 family.

This is Large ribosomal subunit protein bL28 from Rickettsia felis (strain ATCC VR-1525 / URRWXCal2) (Rickettsia azadi).